Reading from the N-terminus, the 377-residue chain is MLMQDSNSFSTVTPQVARFDTPLHLKSGAVLDSYELVYETYGELNAARSNAVLVCHALSGNHHLAGLYDDNPKSAGWWNNMIGPGKSIDTQKFFLIGVNNLGGCHGSTGPASIDVRTGKCYGPNFPVVTVEDWVQTQVRLADYLGIDQFAAVAGGSLGGMQALQWTLDFPERVRHALVIAAAAKLTAQNIAFNDVARQAIITDPDFHGGDYYSHGVIPRRGLRLARMLGHITYLSDDSMAAKFGRELRNGALAFGYDVEFEIESYLRYQGDKFASQFDANTYLLMTKALDYFDPAFPHNNDLSAAFRFARANFLVLSFTTDWRFSPERSRAIVRALLDNELNVSYAEITSSHGHDSFLMEDRHYHRLVRAYMDNVVV.

In terms of domain architecture, AB hydrolase-1 spans 50–359 (NAVLVCHALS…SSHGHDSFLM (310 aa)). The active-site Nucleophile is the serine 156. Position 226 (arginine 226) interacts with substrate. Residues aspartate 321 and histidine 354 contribute to the active site. Aspartate 355 serves as a coordination point for substrate.

This sequence belongs to the AB hydrolase superfamily. MetX family. In terms of assembly, homodimer.

Its subcellular location is the cytoplasm. The enzyme catalyses L-homoserine + succinyl-CoA = O-succinyl-L-homoserine + CoA. Its pathway is amino-acid biosynthesis; L-methionine biosynthesis via de novo pathway; O-succinyl-L-homoserine from L-homoserine: step 1/1. Transfers a succinyl group from succinyl-CoA to L-homoserine, forming succinyl-L-homoserine. The sequence is that of Homoserine O-succinyltransferase from Nitrosospira multiformis (strain ATCC 25196 / NCIMB 11849 / C 71).